The primary structure comprises 422 residues: Solute carrier family 35 member D3 (422 aa).

10 consecutive transmembrane segments (helical) span residues 9–29 (VLGISVAIAHGVFSGSLNILL), 38–58 (FSFLTLVQCLTSSTAALSLEL), 64–84 (LIAVPPFGLSLARSFAGVAVL), 103–123 (MYVVFKRCLPLVTMLIGVLVL), 131–151 (GVLAAVLITTCGAALAGAGDL), 155–175 (PIGYVTGVLAVLVHAAYLVLI), 187–207 (LTAQYVIAVSATPLLVICSFA), 224–244 (AMVSIFVACILIGCAMNFTTL), 257–277 (FVGVVKSIATITVGMVAFSDV), and 280–300 (TSLFIAGVVVNTLGSIIYCVA). Residues 339 to 365 (AKSGNSEPESAEGAGDSVQQGGQESRG) form a disordered region. A compositionally biased stretch (polar residues) spans 355 to 364 (SVQQGGQESR).

This sequence belongs to the TPT transporter family. SLC35D subfamily. In terms of assembly, could interact with ATG14, BECN1 and PIK3C3 that form the PI3KC3-C1/AIC/autophagy initiation complex; enhancing the formation of the AIC and promoting autophagy. In terms of tissue distribution, expressed in brain. Expressed in subsets of dopaminergic neurons. Expressed in maturing megakaryocytes.

It is found in the cytoplasmic vesicle. It localises to the secretory vesicle. The protein resides in the synaptic vesicle membrane. The protein localises to the early endosome membrane. Its subcellular location is the endoplasmic reticulum membrane. The catalysed reaction is UDP-alpha-D-glucose(in) = UDP-alpha-D-glucose(out). Inhibited by proton uncouplers that directly abolish the proton electrochemical gradient. Functionally, probable UDP-glucose transmembrane transporter involved in UDP-glucose transport from the cytosol to the lumen of synaptic vesicles. It is involved in platelet dense granules maturation. In terms of biological role, alternatively, could function as a molecular adapter enhancing the formation of the PI3KC3-C1/AIC/autophagy initiation complex to promote autophagy in dopaminergic neurons. Could also regulate the plasma membrane localization of the D(1A) dopamine receptor/DRD1 and dopamine signaling. In Mus musculus (Mouse), this protein is Solute carrier family 35 member D3.